Reading from the N-terminus, the 548-residue chain is Tylosin resistance ATP-binding protein TlrC (548 aa).

ABC transporter domains are found at residues Leu9 to Gln265 and Ile347 to Ala547. ATP is bound by residues Gly41–Ser48 and Gly387–Ser394.

The protein belongs to the ABC transporter superfamily.

The protein resides in the cell membrane. Responsible for tylosin resistance, and is proposed to be a subunit of a multicomponent export system for the energy-dependent efflux of tylosin. This is Tylosin resistance ATP-binding protein TlrC (tlrC) from Streptomyces fradiae (Streptomyces roseoflavus).